The chain runs to 148 residues: MFRTMMKSKIHRATVTHADLHYVGSVTVDQDLMDAADLLEGEQVCIVDIDNGARLETYVIAGERGSGVIGINGAAAHLVKPGDLVILIAYGVMNEQEVRDYEPRVVFVDAANTPVDLGADPAHAPEGSGLITPRMLSTLDAERESSLV.

The active-site Schiff-base intermediate with substrate; via pyruvic acid is serine 25. Serine 25 is modified (pyruvic acid (Ser)). Threonine 57 lines the substrate pocket. Tyrosine 58 serves as the catalytic Proton donor. Glycine 73 to alanine 75 contacts substrate.

This sequence belongs to the PanD family. In terms of assembly, heterooctamer of four alpha and four beta subunits. Pyruvate serves as cofactor. Is synthesized initially as an inactive proenzyme, which is activated by self-cleavage at a specific serine bond to produce a beta-subunit with a hydroxyl group at its C-terminus and an alpha-subunit with a pyruvoyl group at its N-terminus.

The protein resides in the cytoplasm. The catalysed reaction is L-aspartate + H(+) = beta-alanine + CO2. The protein operates within cofactor biosynthesis; (R)-pantothenate biosynthesis; beta-alanine from L-aspartate: step 1/1. Functionally, catalyzes the pyruvoyl-dependent decarboxylation of aspartate to produce beta-alanine. The chain is Aspartate 1-decarboxylase from Rhodococcus opacus (strain B4).